A 220-amino-acid chain; its full sequence is Ribonuclease HII (220 aa).

One can recognise an RNase H type-2 domain in the interval 32–220 (KHIAGIDEAG…FAPIKGRFDC (189 aa)). A divalent metal cation contacts are provided by aspartate 38, glutamate 39, and aspartate 130.

The protein belongs to the RNase HII family. Requires Mn(2+) as cofactor. It depends on Mg(2+) as a cofactor.

It localises to the cytoplasm. It catalyses the reaction Endonucleolytic cleavage to 5'-phosphomonoester.. Endonuclease that specifically degrades the RNA of RNA-DNA hybrids. The protein is Ribonuclease HII of Brucella canis (strain ATCC 23365 / NCTC 10854 / RM-666).